We begin with the raw amino-acid sequence, 40 residues long: Photosystem II reaction center protein J (40 aa).

The chain crosses the membrane as a helical span at residues 8–28 (IPLWLIGTVAGIPVIGSVGVF).

This sequence belongs to the PsbJ family. As to quaternary structure, PSII is composed of 1 copy each of membrane proteins PsbA, PsbB, PsbC, PsbD, PsbE, PsbF, PsbH, PsbI, PsbJ, PsbK, PsbL, PsbM, PsbT, PsbX, PsbY, PsbZ, Psb30/Ycf12, at least 3 peripheral proteins of the oxygen-evolving complex and a large number of cofactors. It forms dimeric complexes.

The protein resides in the plastid. It localises to the chloroplast thylakoid membrane. Its function is as follows. One of the components of the core complex of photosystem II (PSII). PSII is a light-driven water:plastoquinone oxidoreductase that uses light energy to abstract electrons from H(2)O, generating O(2) and a proton gradient subsequently used for ATP formation. It consists of a core antenna complex that captures photons, and an electron transfer chain that converts photonic excitation into a charge separation. The chain is Photosystem II reaction center protein J from Acorus calamus (Sweet flag).